The following is a 28-amino-acid chain: TNSKEGEFIAEGGGVRGPRIVERXQSAC.

S3 carries the post-translational modification Phosphoserine.

As to quaternary structure, heterohexamer; disulfide linked. Contains 2 sets of 3 non-identical chains (alpha, beta and gamma). The 2 heterotrimers are in head to head conformation with the N-termini in a small central domain. Conversion of fibrinogen to fibrin is triggered by thrombin, which cleaves fibrinopeptides A and B from alpha and beta chains, and thus exposes the N-terminal polymerization sites responsible for the formation of the soft clot. The soft clot is converted into the hard clot by factor XIIIA which catalyzes the epsilon-(gamma-glutamyl)lysine cross-linking between gamma chains (stronger) and between alpha chains (weaker) of different monomers. Post-translationally, forms F13A-mediated cross-links between a glutamine and the epsilon-amino group of a lysine residue, forming fibronectin-fibrinogen heteropolymers.

Its subcellular location is the secreted. Cleaved by the protease thrombin to yield monomers which, together with fibrinogen beta (FGB) and fibrinogen gamma (FGG), polymerize to form an insoluble fibrin matrix. Fibrin has a major function in hemostasis as one of the primary components of blood clots. In addition, functions during the early stages of wound repair to stabilize the lesion and guide cell migration during re-epithelialization. Was originally thought to be essential for platelet aggregation, based on in vitro studies using anticoagulated blood. However, subsequent studies have shown that it is not absolutely required for thrombus formation in vivo. Enhances expression of SELP in activated platelets via an ITGB3-dependent pathway. Maternal fibrinogen is essential for successful pregnancy. Fibrin deposition is also associated with infection, where it protects against IFNG-mediated hemorrhage. May also facilitate the immune response via both innate and T-cell mediated pathways. This chain is Fibrinogen alpha chain (FGA), found in Canis lupus familiaris (Dog).